We begin with the raw amino-acid sequence, 77 residues long: Acyl carrier protein (77 aa).

The 76-residue stretch at 2–77 (SNIEERVKKI…AAIDYVSKNQ (76 aa)) folds into the Carrier domain. An O-(pantetheine 4'-phosphoryl)serine modification is found at Ser-37.

The protein belongs to the acyl carrier protein (ACP) family. Post-translationally, 4'-phosphopantetheine is transferred from CoA to a specific serine of apo-ACP by AcpS. This modification is essential for activity because fatty acids are bound in thioester linkage to the sulfhydryl of the prosthetic group.

It is found in the cytoplasm. The protein operates within lipid metabolism; fatty acid biosynthesis. Carrier of the growing fatty acid chain in fatty acid biosynthesis. The protein is Acyl carrier protein of Shewanella oneidensis (strain ATCC 700550 / JCM 31522 / CIP 106686 / LMG 19005 / NCIMB 14063 / MR-1).